Consider the following 247-residue polypeptide: Probable dihydroorotate dehydrogenase B (NAD(+)), electron transfer subunit (247 aa).

In terms of domain architecture, FAD-binding FR-type spans 1-87; sequence MLRRVTLKET…RGPYGNGFKE (87 aa). Residues Cys200, Cys205, Cys208, and Cys216 each contribute to the [2Fe-2S] cluster site.

It belongs to the PyrK family. As to quaternary structure, heterotetramer of 2 PyrK and 2 PyrD type B subunits. [2Fe-2S] cluster serves as cofactor. It depends on FAD as a cofactor.

The protein operates within pyrimidine metabolism; UMP biosynthesis via de novo pathway; orotate from (S)-dihydroorotate (NAD(+) route): step 1/1. Functionally, responsible for channeling the electrons from the oxidation of dihydroorotate from the FMN redox center in the PyrD type B subunit to the ultimate electron acceptor NAD(+). The sequence is that of Probable dihydroorotate dehydrogenase B (NAD(+)), electron transfer subunit from Pyrococcus horikoshii (strain ATCC 700860 / DSM 12428 / JCM 9974 / NBRC 100139 / OT-3).